Here is a 350-residue protein sequence, read N- to C-terminus: Probable DNA polymerase III subunit delta (350 aa).

Belongs to the DNA polymerase HolA subunit family. As to quaternary structure, component of the DNA clamp loading complex consisting of tau(3):delta(1):delta'(1). The DNA polymerase III holoenzyme complex contains at least 10 different subunits organized into 3 functionally essential subassemblies: the Pol III core, the beta sliding clamp processivity factor and the clamp-loading complex. The Pol III core (subunits alpha, epsilon and theta) contains the polymerase and the 3'-5' exonuclease proofreading activities. The polymerase is tethered to the template via the dimeric beta sliding clamp processivity factor. The DNA clamp-loading complex assembles the beta sliding clamp onto the primed template and plays a central role in the organization and communication at the replication fork.

It carries out the reaction DNA(n) + a 2'-deoxyribonucleoside 5'-triphosphate = DNA(n+1) + diphosphate. In terms of biological role, part of the beta sliding clamp loading complex, which hydrolyzes ATP to load the beta clamp onto primed DNA to form the DNA replication pre-initiation complex. DNA polymerase III is a complex, multichain enzyme responsible for most of the replicative synthesis in bacteria. This DNA polymerase also exhibits 3'-5' exonuclease activity. The delta subunit is the wrench that will open the beta subunit dimer. The DNA clamp loading complex (tau(3),delta,delta') is thought to load beta dimers onto DNA by binding ATP which alters the complex's conformation so it can bind beta sliding clamp dimers and open them at one interface. Primed DNA is recognized, ATP is hydrolyzed releasing the clamp loading complex and closing the beta sliding clamp ring around the primed DNA. In Aquifex aeolicus (strain VF5), this protein is Probable DNA polymerase III subunit delta.